The primary structure comprises 307 residues: Olfactory receptor 5M3 (307 aa).

The Extracellular portion of the chain corresponds to 1 to 23 (MLNFTDVTEFILLGLTSRREWQV). The N-linked (GlcNAc...) asparagine glycan is linked to asparagine 3. The helical transmembrane segment at 24–44 (LFFIIFLVVYIITMVGNIGMM) threads the bilayer. Over 45–52 (VLIKVSPQ) the chain is Cytoplasmic. A helical membrane pass occupies residues 53 to 73 (LNNPMYFFLSHLSFVDVWFSS). At 74 to 97 (NVTPKMLENLLSDKKTITYAGCLV) the chain is on the extracellular side. Cysteine 95 and cysteine 187 are joined by a disulfide. A helical membrane pass occupies residues 98–118 (QCFFFIALVHVEIFILAAMAF). The Cytoplasmic segment spans residues 119-137 (DRYMAIGNPLLYGSKMSRV). The helical transmembrane segment at 138 to 158 (VCIRLITFPYIYGFLTSLAAT) threads the bilayer. At 159 to 194 (LWTYGLYFCGKIEINHFYCADPPLIKMACAGTFVKE) the chain is on the extracellular side. The helical transmembrane segment at 195 to 215 (YTMIILAGINFTYSLTVIIIS) threads the bilayer. Residues 216–235 (YLFILIAILRMRSAEGRQKA) are Cytoplasmic-facing. Residues 236–256 (FSTCGSHLTAVIIFYGTLIFM) traverse the membrane as a helical segment. Topologically, residues 257–269 (YLRRPTEESVEQG) are extracellular. A helical transmembrane segment spans residues 270–290 (KMVAVFYTTVIPMLNPMIYSL). The Cytoplasmic portion of the chain corresponds to 291–307 (RNKDVKKAMMKVISRSC).

Belongs to the G-protein coupled receptor 1 family.

It localises to the cell membrane. Its function is as follows. Odorant receptor. In Homo sapiens (Human), this protein is Olfactory receptor 5M3 (OR5M3).